Consider the following 87-residue polypeptide: Small ribosomal subunit protein uS17 (87 aa).

This sequence belongs to the universal ribosomal protein uS17 family. Part of the 30S ribosomal subunit.

One of the primary rRNA binding proteins, it binds specifically to the 5'-end of 16S ribosomal RNA. This is Small ribosomal subunit protein uS17 from Pelotomaculum thermopropionicum (strain DSM 13744 / JCM 10971 / SI).